Consider the following 81-residue polypeptide: ATP synthase subunit c (81 aa).

A run of 2 helical transmembrane segments spans residues 3-23 (PLIA…GAIG) and 57-77 (LAFM…LLFA).

This sequence belongs to the ATPase C chain family. In terms of assembly, F-type ATPases have 2 components, F(1) - the catalytic core - and F(0) - the membrane proton channel. F(1) has five subunits: alpha(3), beta(3), gamma(1), delta(1), epsilon(1). F(0) has four main subunits: a(1), b(1), b'(1) and c(10-14). The alpha and beta chains form an alternating ring which encloses part of the gamma chain. F(1) is attached to F(0) by a central stalk formed by the gamma and epsilon chains, while a peripheral stalk is formed by the delta, b and b' chains.

It is found in the cellular thylakoid membrane. F(1)F(0) ATP synthase produces ATP from ADP in the presence of a proton or sodium gradient. F-type ATPases consist of two structural domains, F(1) containing the extramembraneous catalytic core and F(0) containing the membrane proton channel, linked together by a central stalk and a peripheral stalk. During catalysis, ATP synthesis in the catalytic domain of F(1) is coupled via a rotary mechanism of the central stalk subunits to proton translocation. In terms of biological role, key component of the F(0) channel; it plays a direct role in translocation across the membrane. A homomeric c-ring of between 10-14 subunits forms the central stalk rotor element with the F(1) delta and epsilon subunits. The polypeptide is ATP synthase subunit c (Trichodesmium erythraeum (strain IMS101)).